A 691-amino-acid chain; its full sequence is Elongation factor G (691 aa).

The tr-type G domain occupies 8-283 (EDYRNFGIMA…AVVDYLPSPA (276 aa)). GTP is bound by residues 17-24 (AHIDAGKT), 81-85 (DTPGH), and 135-138 (NKMD).

Belongs to the TRAFAC class translation factor GTPase superfamily. Classic translation factor GTPase family. EF-G/EF-2 subfamily.

It is found in the cytoplasm. Functionally, catalyzes the GTP-dependent ribosomal translocation step during translation elongation. During this step, the ribosome changes from the pre-translocational (PRE) to the post-translocational (POST) state as the newly formed A-site-bound peptidyl-tRNA and P-site-bound deacylated tRNA move to the P and E sites, respectively. Catalyzes the coordinated movement of the two tRNA molecules, the mRNA and conformational changes in the ribosome. The sequence is that of Elongation factor G from Methylobacterium radiotolerans (strain ATCC 27329 / DSM 1819 / JCM 2831 / NBRC 15690 / NCIMB 10815 / 0-1).